Here is a 214-residue protein sequence, read N- to C-terminus: Putative 3-methyladenine DNA glycosylase (214 aa).

It belongs to the DNA glycosylase MPG family.

The sequence is that of Putative 3-methyladenine DNA glycosylase from Gloeobacter violaceus (strain ATCC 29082 / PCC 7421).